Reading from the N-terminus, the 367-residue chain is Leucine-rich repeat-containing protein 28 (367 aa).

9 LRR repeats span residues 16 to 36 (KHKNLFLNYRNLNHFPLELLK), 42 to 63 (YLERLYMKRNSLTTLPENLAQK), 66 to 87 (NLVELYLHSNNIVFVPEAIGSL), 89 to 111 (KLQSLDLSNNALEILCPDIGRLK), 112 to 133 (SLRHLRLTNNRLKFLPPEIGKL), 135 to 156 (ELQTLDLSTNHLVSLPEKLYQC), 158 to 179 (SLQYLTVDRNLLCSIPRQLCQL), 181 to 202 (SLNELSMAGNRLASLPLDLGRS), and 204 to 226 (ELQYVYVDNNVQLKGLPSYLYNK).

This chain is Leucine-rich repeat-containing protein 28 (lrrc28), found in Xenopus tropicalis (Western clawed frog).